A 127-amino-acid polypeptide reads, in one-letter code: QGSKVIVMVTDLRESGKPKCERYFPENGEGVEYGSIHVETTQVTSYGGYQQRILAVKLAEEEVYDNDDGTEQNDEQTEEEPEVRYITHLQCKRWPDHGVPKSTSAIFRLYYKMLEYRPRDCEAPILV.

The region spanning 1–127 (QGSKVIVMVT…PRDCEAPILV (127 aa)) is the Tyrosine-protein phosphatase domain. A compositionally biased stretch (acidic residues) spans 63 to 81 (VYDNDDGTEQNDEQTEEEP). The disordered stretch occupies residues 63–82 (VYDNDDGTEQNDEQTEEEPE).

It belongs to the protein-tyrosine phosphatase family.

The catalysed reaction is O-phospho-L-tyrosyl-[protein] + H2O = L-tyrosyl-[protein] + phosphate. The sequence is that of Tyrosine-protein phosphatase 2 (STY-2) from Styela plicata (Wrinkled sea squirt).